A 779-amino-acid chain; its full sequence is MCYSRQAIPPPVPNRPGGTTNRGPPPLPPRANVQPPVCSSENSSKPRENRVAGESLRTPSSSNPLADSQVNSDNIFQSPVLSNLKAPPSVFNKVQHPVPKPNIDDQSVDPLETNKFYTNMLLDDNTQPIWTHPYSIWFSRDPELFGLAANHTLASQRVFDTTTNPPRFYFNPTNIKSFVFKAREFVSSNDIKLEFRDMKHMSMCLLMSLSSSQFIEFPLVQGMGFVTAIYHDLGFELRSAVGFRSLERISVNERYGKYNIQLENNRNWILYLTSPDYSFPQDFQISLLDSNTIISSHKINGLICQLSADSVPSIDMAAGCYPVYCDLSGQTVDEHFTNYRFNYTVAGYSQSGTTLMYALPHHKAAFTPEMQEREIASSLDSTVKGLMTGYLTNSFDMQVQVPQELGFEPVALSLNKKADYSQEKLSKIREAAVQEVQLSDPQQESNIDSMYFSGKILAKYAWILYVTHYILHDENLTKELLSKLTIAMERFISNQQVLPLNYDVSWKGIISSGSSSQDFGNSYYNDHHFHYSYHVITAAIISLVDSDLSGVTNNSWLENNRDWVECLIRDYSGVDNDDPYFPQFRSFDWFNGHSWAKGLFPSGDGKDEESTSEDVNSCYAIKLWGLVTGNSKLTDIANLQLGIMRNVFQSYFLYESNNTVQPKEFIGNKVSGILFENKIDHATYFGMEPQYIHMIHAIPITSASSWVRTPNFVKEEWEEKMQPIIDQVNDGWKGIIMLNMALLDPKFSYDFFSQPDFNRNFLDNGQSLTWSLAYSGAFS.

The tract at residues 1-71 (MCYSRQAIPP…SNPLADSQVN (71 aa)) is disordered. Polar residues predominate over residues 57 to 71 (RTPSSSNPLADSQVN). Residues 73–309 (DNIFQSPVLS…NGLICQLSAD (237 aa)) are beta-sandwich subdomain. In terms of domain architecture, GH81 spans 73–779 (DNIFQSPVLS…WSLAYSGAFS (707 aa)). An alpha/beta subdomain region spans residues 309-400 (DSVPSIDMAA…LTNSFDMQVQ (92 aa)). Positions 375–779 (IASSLDSTVK…WSLAYSGAFS (405 aa)) are sufficient for catalytic activity. A (alpha/beta)6 barrel subdomain region spans residues 415–779 (NKKADYSQEK…WSLAYSGAFS (365 aa)). Residue Asp-526 is part of the active site. Positions 530, 607, 609, and 613 each coordinate (1,3-beta-D-glucosyl)n. Residues Glu-609 and Glu-613 contribute to the active site. The tract at residues 678 to 680 (KID) is may provide specificity for triple-helical beta-glucan. Position 691 (Tyr-691) interacts with (1,3-beta-D-glucosyl)n.

This sequence belongs to the glycosyl hydrolase 81 family.

It is found in the cytoplasm. The catalysed reaction is Hydrolysis of (1-&gt;3)-beta-D-glucosidic linkages in (1-&gt;3)-beta-D-glucans.. With respect to regulation, inhibited by mercury ions. Cleaves internal linkages in 1,3-beta-glucan. The protein is Glucan endo-1,3-beta-D-glucosidase 2 of Saccharomyces cerevisiae (strain ATCC 204508 / S288c) (Baker's yeast).